A 533-amino-acid chain; its full sequence is Flavin-dependent halogenase gsfI (533 aa).

Residues glycine 14, glycine 17, and glutamate 47 each coordinate FAD. Chloride is bound by residues serine 331 and glycine 332.

Belongs to the flavin-dependent halogenase family.

The catalysed reaction is griseophenone C + FADH2 + chloride + O2 = griseophenone B + FAD + 2 H2O + H(+). It participates in secondary metabolite biosynthesis; terpenoid biosynthesis. Its function is as follows. Flavin-dependent halogenase; part of the gene cluster that mediates the biosynthesis of griseofulvin, an important antifungal drug that has been in use for a long time for treating dermatophyte infections. The first step of the pathway is the formation of the heptaketide backbone by gsfA which is initiated by priming with acetyl-CoA, followed by sequential condensations of 6 malonyl-CoA units. The resulting benzophenone can undergo a spontaneous dehydration to form norlichexanthone. However, the true precursor for the griseofulvin biosynthesis is not norlichexanthone, but the heptaketide benzophenone that is O-methylated at 3-OH by gsfB to produce griseophenone D which is further methylated at 9-OH by gsfC to yield griseophenone C. Griseophenone C is then substrate of halogenase gsfI which is responsible for the regio-specific chlorination at the C13 position to form griseophenone B. The cytochrome P450 gsfF catalyzes the coupling of orcinol and phloroglucinol rings in griseophenone B to form desmethyl-dehydrogriseofulvin A which is further methylated at 5-OH by gsfD to yield dehydrogriseofulvin. Finally, gsfE performs stereospecific reduction of enone 18 of dehydrogriseofulvin to afford the final product griseofulvin. This Penicillium aethiopicum protein is Flavin-dependent halogenase gsfI.